A 444-amino-acid polypeptide reads, in one-letter code: Ribulose bisphosphate carboxylase (444 aa).

Lysine 163 serves as the catalytic Proton acceptor. Lysine 165 serves as a coordination point for substrate. Residues lysine 189, aspartate 191, and glutamate 192 each coordinate Mg(2+). N6-carboxylysine is present on lysine 189. Histidine 281 functions as the Proton acceptor in the catalytic mechanism. Substrate-binding positions include arginine 282, histidine 314, 367-369, and 389-392; these read SGG and QLGG.

It belongs to the RuBisCO large chain family. Type III subfamily. In terms of assembly, homodecamer, consisting of five dimer units which form a ring-like pentagonal structure. This arrangement is essential for its high thermostability. In contrast to form I RuBisCO, the form III RuBisCO is composed solely of large subunits. The cofactor is Mg(2+).

The enzyme catalyses 2 (2R)-3-phosphoglycerate + 2 H(+) = D-ribulose 1,5-bisphosphate + CO2 + H2O. It carries out the reaction D-ribulose 1,5-bisphosphate + O2 = 2-phosphoglycolate + (2R)-3-phosphoglycerate + 2 H(+). Functionally, catalyzes the addition of molecular CO(2) and H(2)O to ribulose 1,5-bisphosphate (RuBP), generating two molecules of 3-phosphoglycerate (3-PGA). Functions in an archaeal AMP degradation pathway, together with AMP phosphorylase and R15P isomerase. This is Ribulose bisphosphate carboxylase from Thermococcus kodakarensis (strain ATCC BAA-918 / JCM 12380 / KOD1) (Pyrococcus kodakaraensis (strain KOD1)).